The sequence spans 306 residues: Glutathione transport system permease protein GsiC (306 aa).

The Cytoplasmic segment spans residues 1-8; the sequence is MLNYVLKR. A helical membrane pass occupies residues 9–29; the sequence is LLGLIPTLLIVAVLVFLFVHL. Residues 30–102 lie on the Periplasmic side of the membrane; it reads LPGDPARLIA…SRFLPTLWLT (73 aa). The region spanning 95–292 is the ABC transmembrane type-1 domain; that stretch reads FLPTLWLTIT…LEFILINLVV (198 aa). The helical transmembrane segment at 103-123 threads the bilayer; sequence ITSMIWAVLFGMAIGIAAAVW. The Cytoplasmic portion of the chain corresponds to 124–134; sequence RNRWPDRLGMT. Residues 135–155 traverse the membrane as a helical segment; sequence LAVTGISFPAFALGMLLMQIF. Residues 156–168 lie on the Periplasmic side of the membrane; the sequence is SVDLGWLPTVGAD. The chain crosses the membrane as a helical span at residues 169–189; it reads SWQHYILPSLTLGAAVASVMA. The Cytoplasmic segment spans residues 190–228; that stretch reads RFTRSSFVDVLSEDYMRTARAKGVSETWVVLKHGLRNAM. A helical membrane pass occupies residues 229–249; that stretch reads IPVVTMMGLQFGFLLGGSIVV. Topologically, residues 250-278 are periplasmic; it reads EKVFNWPGLGRLLVDSVDMRDYPVIQAEV. The helical transmembrane segment at 279-299 threads the bilayer; that stretch reads LLFSLEFILINLVVDVLYAAI. Over 300-306 the chain is Cytoplasmic; it reads NPAIRYK.

It belongs to the binding-protein-dependent transport system permease family. In terms of assembly, the complex is composed of two ATP-binding proteins (GsiA), two transmembrane proteins (GsiC and GsiD) and a solute-binding protein (GsiB).

The protein resides in the cell inner membrane. Part of the ABC transporter complex GsiABCD involved in glutathione import. Probably responsible for the translocation of the substrate across the membrane. The protein is Glutathione transport system permease protein GsiC of Salmonella paratyphi A (strain ATCC 9150 / SARB42).